A 354-amino-acid chain; its full sequence is Ribosomal RNA large subunit methyltransferase M (354 aa).

Residues serine 183, 216 to 219 (SPGG), aspartate 235, aspartate 255, and aspartate 271 each bind S-adenosyl-L-methionine. Lysine 300 acts as the Proton acceptor in catalysis.

Belongs to the class I-like SAM-binding methyltransferase superfamily. RNA methyltransferase RlmE family. RlmM subfamily. In terms of assembly, monomer.

It localises to the cytoplasm. The catalysed reaction is cytidine(2498) in 23S rRNA + S-adenosyl-L-methionine = 2'-O-methylcytidine(2498) in 23S rRNA + S-adenosyl-L-homocysteine + H(+). Its function is as follows. Catalyzes the 2'-O-methylation at nucleotide C2498 in 23S rRNA. The chain is Ribosomal RNA large subunit methyltransferase M from Pseudomonas putida (strain ATCC 47054 / DSM 6125 / CFBP 8728 / NCIMB 11950 / KT2440).